Reading from the N-terminus, the 353-residue chain is Chorismate synthase (353 aa).

NADP(+)-binding residues include Arg48 and Arg54. Residues 125–127 (RSS), 238–239 (NA), Gly278, 293–297 (KPTSS), and Arg319 contribute to the FMN site.

This sequence belongs to the chorismate synthase family. In terms of assembly, homotetramer. FMNH2 is required as a cofactor.

It catalyses the reaction 5-O-(1-carboxyvinyl)-3-phosphoshikimate = chorismate + phosphate. It functions in the pathway metabolic intermediate biosynthesis; chorismate biosynthesis; chorismate from D-erythrose 4-phosphate and phosphoenolpyruvate: step 7/7. In terms of biological role, catalyzes the anti-1,4-elimination of the C-3 phosphate and the C-6 proR hydrogen from 5-enolpyruvylshikimate-3-phosphate (EPSP) to yield chorismate, which is the branch point compound that serves as the starting substrate for the three terminal pathways of aromatic amino acid biosynthesis. This reaction introduces a second double bond into the aromatic ring system. The protein is Chorismate synthase of Bordetella parapertussis (strain 12822 / ATCC BAA-587 / NCTC 13253).